A 302-amino-acid polypeptide reads, in one-letter code: Glycine--tRNA ligase alpha subunit (302 aa).

Belongs to the class-II aminoacyl-tRNA synthetase family. Tetramer of two alpha and two beta subunits.

The protein localises to the cytoplasm. The enzyme catalyses tRNA(Gly) + glycine + ATP = glycyl-tRNA(Gly) + AMP + diphosphate. This is Glycine--tRNA ligase alpha subunit from Xanthomonas oryzae pv. oryzae (strain MAFF 311018).